The sequence spans 453 residues: Cysteine desulfurase, mitochondrial (453 aa).

A mitochondrion-targeting transit peptide spans 1–34 (MASKVISATIRRTLTKPHGTFSRCRYLSTAAAAT). Pyridoxal 5'-phosphate is bound by residues 123–124 (AT), Asn-203, Gln-231, and 251–253 (SAH). Position 254 is an N6-(pyridoxal phosphate)lysine (Lys-254). Thr-291 serves as a coordination point for pyridoxal 5'-phosphate. Cys-377 (cysteine persulfide intermediate) is an active-site residue. Cys-377 provides a ligand contact to [2Fe-2S] cluster.

The protein belongs to the class-V pyridoxal-phosphate-dependent aminotransferase family. NifS/IscS subfamily. As to quaternary structure, interacts with FH. Interacts with SUFE1. The cofactor is pyridoxal 5'-phosphate.

It is found in the mitochondrion. It catalyses the reaction (sulfur carrier)-H + L-cysteine = (sulfur carrier)-SH + L-alanine. With respect to regulation, threefold increase in the catalytic activity in the presence of FH (frataxin). 30-fold increase in the catalytic activity in the presence of SUFE1. Its function is as follows. Catalyzes the removal of elemental sulfur from cysteine to produce alanine. Supplies the inorganic sulfur for iron-sulfur (Fe-S) clusters. The chain is Cysteine desulfurase, mitochondrial from Arabidopsis thaliana (Mouse-ear cress).